Consider the following 373-residue polypeptide: MHKESPIIRRKSTRIYVGNVPIGDGAPIAVQSMTNTRTTDVEATVNQIKSLERVGVDIVRVSVPTMDAAEAFKLIKQQVKVPLVADIHFDYRIALKVAEYGVDCLRINPGNIGNEERIRQVVDCARDRNIPIRIGVNGGSLEKDIQEKYGEPTPEALVESAMRHVDILDKLNFDQFKVSVKASDVFLAVDSYRLLAKKIDQPLHLGITEAGGARAGSVKSAIGLGILLSEGIGDTLRISLAADPVEEVKVGFDILKSLRIRSRGINFIACPTCSRQEFDVIGTVNELEQRLEDIITPMDVSIIGCVVNGPGEAEVSTLGVTGAKTRSGFYEDGVRQKERLDNSNMIDLLEAKIRTKAAMLDGNLRININQLDK.

Cys270, Cys273, Cys305, and Glu312 together coordinate [4Fe-4S] cluster.

The protein belongs to the IspG family. The cofactor is [4Fe-4S] cluster.

The enzyme catalyses (2E)-4-hydroxy-3-methylbut-2-enyl diphosphate + oxidized [flavodoxin] + H2O + 2 H(+) = 2-C-methyl-D-erythritol 2,4-cyclic diphosphate + reduced [flavodoxin]. Its pathway is isoprenoid biosynthesis; isopentenyl diphosphate biosynthesis via DXP pathway; isopentenyl diphosphate from 1-deoxy-D-xylulose 5-phosphate: step 5/6. In terms of biological role, converts 2C-methyl-D-erythritol 2,4-cyclodiphosphate (ME-2,4cPP) into 1-hydroxy-2-methyl-2-(E)-butenyl 4-diphosphate. The sequence is that of 4-hydroxy-3-methylbut-2-en-1-yl diphosphate synthase (flavodoxin) from Proteus mirabilis (strain HI4320).